A 287-amino-acid polypeptide reads, in one-letter code: MSLQALYDVPAPAKLNLFLHVTGRRDDGYHLLQSVFALIDWADTLHFERRLDGRLVRHDLAAALPEDDLCLRAARLLQRESACPLGADISIDKDVPWGAGLGGGSSDAASTLLALNRLWGLHWSRERLLALGLQLGADVPFFVGGHNAWVEGIGERLTPIELAPRWWAVLKPAVAVPTVAIFGSPLLVRNTAAATISDFSANAVEFGHNDLQTPAMAYSDEVVQALALLQSRYGASRMSGSGSAVFAEAGTGESPTVAMMEAASLPPSWVGRMCRGLTVHPLALWAG.

The active site involves Lys14. 96–106 (PWGAGLGGGSS) provides a ligand contact to ATP. Residue Asp138 is part of the active site.

Belongs to the GHMP kinase family. IspE subfamily.

The catalysed reaction is 4-CDP-2-C-methyl-D-erythritol + ATP = 4-CDP-2-C-methyl-D-erythritol 2-phosphate + ADP + H(+). It participates in isoprenoid biosynthesis; isopentenyl diphosphate biosynthesis via DXP pathway; isopentenyl diphosphate from 1-deoxy-D-xylulose 5-phosphate: step 3/6. Its function is as follows. Catalyzes the phosphorylation of the position 2 hydroxy group of 4-diphosphocytidyl-2C-methyl-D-erythritol. This is 4-diphosphocytidyl-2-C-methyl-D-erythritol kinase from Methylibium petroleiphilum (strain ATCC BAA-1232 / LMG 22953 / PM1).